The primary structure comprises 91 residues: UPF0147 protein APE_2336a (91 aa).

It belongs to the UPF0147 family.

This Aeropyrum pernix (strain ATCC 700893 / DSM 11879 / JCM 9820 / NBRC 100138 / K1) protein is UPF0147 protein APE_2336a.